The sequence spans 223 residues: Nicotinamide/nicotinic acid mononucleotide adenylyltransferase 2 (223 aa).

NAD(+) is bound by residues Ser11 and Phe12. His19 provides a ligand contact to ATP. NAD(+) contacts are provided by Trp87, Thr90, Gly116, Asp118, Leu133, Trp134, and Arg153. ATP is bound at residue 190 to 191 (TR).

It belongs to the eukaryotic NMN adenylyltransferase family. A divalent metal cation is required as a cofactor.

The enzyme catalyses beta-nicotinamide D-ribonucleotide + ATP + H(+) = diphosphate + NAD(+). The catalysed reaction is nicotinate beta-D-ribonucleotide + ATP + H(+) = deamido-NAD(+) + diphosphate. It participates in cofactor biosynthesis; NAD(+) biosynthesis; deamido-NAD(+) from nicotinate D-ribonucleotide: step 1/1. The protein operates within cofactor biosynthesis; NAD(+) biosynthesis; NAD(+) from nicotinamide D-ribonucleotide: step 1/1. In terms of biological role, catalyzes the formation of NAD(+) from nicotinamide mononucleotide (NMN) and ATP. Can also use the deamidated form; nicotinic acid mononucleotide (NaMN) as substrate. The chain is Nicotinamide/nicotinic acid mononucleotide adenylyltransferase 2 from Caenorhabditis elegans.